A 432-amino-acid chain; its full sequence is Cyclin-A2 (432 aa).

Met-1 carries the N-acetylmethionine modification. At Ser-5 the chain carries Phosphoserine. 2 disordered regions span residues 26–45 and 55–75; these read LQED…QQPR and SGNP…VAPL. Residue Ser-55 is modified to Phosphoserine.

Belongs to the cyclin family. Cyclin AB subfamily. Interacts with the CDK1 and CDK2 protein kinases to form serine/threonine kinase holoenzyme complexes. Interacts with CDK1 (hyperphosphorylated form in G1 and underphosphorylated forms in S and G2). Interacts with CDK2; the interaction increases from G1 to G2. Interacts (associated with CDK2 but not with CDK1) with SCAPER; regulates the activity of CCNA2/CDK2 by transiently maintaining CCNA2 in the cytoplasm. Forms a ternary complex with CDK2 and CDKN1B; CDKN1B inhibits the kinase activity of CDK2 through conformational rearrangements. Interacts with INCA1. In terms of assembly, (Microbial infection) Interacts with human cytomegalovirus protein UL32. Polyubiquitinated via 'Lys-11'-linked ubiquitin by the anaphase-promoting complex (APC/C), leading to its degradation by the proteasome. Deubiquitinated and stabilized by USP37 enables entry into S phase. Ubiquitinated during the G1 phase by the SCF(FBXO31) complex, leading to its proteasomal degradation.

It is found in the nucleus. The protein localises to the cytoplasm. In terms of biological role, cyclin which controls both the G1/S and the G2/M transition phases of the cell cycle. Functions through the formation of specific serine/threonine protein kinase holoenzyme complexes with the cyclin-dependent protein kinases CDK1 or CDK2. The cyclin subunit confers the substrate specificity of these complexes and differentially interacts with and activates CDK1 and CDK2 throughout the cell cycle. This Homo sapiens (Human) protein is Cyclin-A2.